A 977-amino-acid polypeptide reads, in one-letter code: Disks large-associated protein 3 (977 aa).

Residues 1–10 are compositionally biased toward basic and acidic residues; sequence MRGYHGDRGS. 6 disordered regions span residues 1 to 30, 52 to 90, 137 to 167, 181 to 289, 398 to 417, and 529 to 582; these read MRGY…PAAR, AGLG…SSTF, FHTL…ESPS, AKSH…CLDA, AMGD…SPKA, and PGSS…SADG. Low complexity predominate over residues 53 to 73; the sequence is GLGHLSPEGPLSLSEGPSSVG. The residue at position 58 (Ser-58) is a Phosphoserine. Gly residues predominate over residues 74–85; it reads PEGGPGGVGAGG. The segment covering 189 to 201 has biased composition (basic and acidic residues); it reads PGKRDYNGPKAEG. The span at 202–212 shows a compositional bias: low complexity; it reads RSSSGGDSYSG. Positions 221–245 are enriched in basic residues; that stretch reads SHHHHHHHHHHHHQSRHGKRSKSKD. A compositionally biased stretch (low complexity) spans 258–271; it reads GWWSSDDNLDSDSG. 4 positions are modified to phosphoserine: Ser-404, Ser-407, Ser-410, and Ser-414. Pro residues predominate over residues 538-547; it reads APPPIPPGSQ. Residues Ser-641 and Ser-643 each carry the phosphoserine modification. Disordered stretches follow at residues 739-788 and 906-939; these read EGYP…RTSP and EEKK…RQRQ. The segment covering 754–763 has biased composition (pro residues); the sequence is PGPPPVPAPG. Composition is skewed to basic and acidic residues over residues 767–777 and 925–939; these read GRRDSWMERGS and PVKE…RQRQ. A phosphoserine mark is found at Ser-930, Ser-933, and Ser-965.

It belongs to the SAPAP family. In terms of assembly, interacts with DLG1 and DLG4/PSD-95. Expressed in most brain regions.

It localises to the cell membrane. Its subcellular location is the postsynaptic density. It is found in the synapse. May play a role in the molecular organization of synapses and neuronal cell signaling. Could be an adapter protein linking ion channel to the subsynaptic cytoskeleton. May induce enrichment of PSD-95/SAP90 at the plasma membrane. This is Disks large-associated protein 3 (Dlgap3) from Rattus norvegicus (Rat).